Consider the following 266-residue polypeptide: Energy-coupling factor transporter transmembrane protein EcfT (266 aa).

The next 7 membrane-spanning stretches (helical) occupy residues 26–46 (VIAT…RSVT), 47–67 (LAGL…HYIL), 69–89 (GIKP…LSTP), 116–136 (LIWL…IALT), 151–171 (LPVH…PTLI), 192–212 (SLVA…LSAF), and 246–266 (YAVT…KKAL).

It belongs to the energy-coupling factor EcfT family. In terms of assembly, forms a stable energy-coupling factor (ECF) transporter complex composed of 2 membrane-embedded substrate-binding proteins (S component), 2 ATP-binding proteins (A component) and 2 transmembrane proteins (T component). May be able to interact with more than 1 S component at a time.

The protein resides in the cell membrane. Functionally, transmembrane (T) component of an energy-coupling factor (ECF) ABC-transporter complex. Unlike classic ABC transporters this ECF transporter provides the energy necessary to transport a number of different substrates. This is Energy-coupling factor transporter transmembrane protein EcfT from Heliobacterium modesticaldum (strain ATCC 51547 / Ice1).